Reading from the N-terminus, the 192-residue chain is Ornithine lipid N-methyltransferase (192 aa).

The protein belongs to the methyltransferase superfamily.

The enzyme catalyses an N(2)-[(3R)-3-(2-saturated-acyloxy)acyl]-L-ornithine lipid + 3 S-adenosyl-L-methionine = an N,N,N-trimethylornithine lipid + 3 S-adenosyl-L-homocysteine + 3 H(+). Functionally, catalyzes the 3-fold methylation of ornithine lipids. Forms ornithine lipids that are mono-, di-, and trimethylated on the delta-nitrogen of the ornithine head group. This is Ornithine lipid N-methyltransferase from Singulisphaera acidiphila (strain ATCC BAA-1392 / DSM 18658 / VKM B-2454 / MOB10).